The following is a 1238-amino-acid chain: Kinesin-related protein 10 (1238 aa).

The region spanning 16–374 is the Kinesin motor domain; the sequence is SMIVTVRIRP…LKYAQRAKSI (359 aa). 116–123 lines the ATP pocket; that stretch reads GASGAGKT. A compositionally biased stretch (low complexity) spans 417–436; that stretch reads NNNNSNNNNNNNNNNYFSNS. The tract at residues 417-503 is disordered; that stretch reads NNNNSNNNNN…DGEDSNNRDN (87 aa). The span at 437–464 shows a compositional bias: polar residues; sequence FGSCGNKNQPIKQPTPPTSLFHQQNQKY. A compositionally biased stretch (acidic residues) spans 468–497; sequence DDDDDDDNDQEENNDEVLINEDDEEVDGED. A coiled-coil region spans residues 527–602; the sequence is TLKKTQSIQR…NNQWRRKLQS (76 aa). Low complexity-rich tracts occupy residues 726–795, 918–934, and 961–971; these read NDIN…NIIN, LLPS…SSPL, and NNNNNNNNIAP. 4 disordered regions span residues 726 to 802, 891 to 971, 1134 to 1156, and 1191 to 1238; these read NDIN…LKPR, EIDD…NIAP, TPTS…TTST, and ATLT…KIIK. Positions 1191-1203 are enriched in polar residues; that stretch reads ATLTPNRNNSQIV. Low complexity predominate over residues 1215-1228; sequence PTSSSSRLLPSSRT. Polar residues predominate over residues 1229-1238; the sequence is TVNTSRKIIK.

This sequence belongs to the TRAFAC class myosin-kinesin ATPase superfamily. Kinesin family.

The protein resides in the cytoplasm. It localises to the cytoskeleton. In terms of biological role, microtubule-associated force-producing protein that plays a role in organelle transport. Its motor activity is directed toward the microtubule's plus end. Cooperates with kif8 and dynein to organize interphase microtubules. In Dictyostelium discoideum (Social amoeba), this protein is Kinesin-related protein 10 (kif10).